Consider the following 159-residue polypeptide: Putative ribosomal RNA large subunit methyltransferase H (159 aa).

S-adenosyl-L-methionine-binding positions include leucine 76, glycine 108, and 127–132; that span reads LSAMTF.

This sequence belongs to the RNA methyltransferase RlmH family.

It localises to the cytoplasm. It catalyses the reaction pseudouridine(1915) in 23S rRNA + S-adenosyl-L-methionine = N(3)-methylpseudouridine(1915) in 23S rRNA + S-adenosyl-L-homocysteine + H(+). Functionally, specifically methylates the pseudouridine at position 1915 (m3Psi1915) in 23S rRNA. The chain is Putative ribosomal RNA large subunit methyltransferase H from Methanospirillum hungatei JF-1 (strain ATCC 27890 / DSM 864 / NBRC 100397 / JF-1).